The sequence spans 1396 residues: DNA-directed RNA polymerase subunit beta' (1396 aa).

Residues Cys70, Cys72, Cys85, and Cys88 each contribute to the Zn(2+) site. Residues Asp460, Asp462, and Asp464 each contribute to the Mg(2+) site. Residues Cys814, Cys888, Cys895, and Cys898 each coordinate Zn(2+).

It belongs to the RNA polymerase beta' chain family. In terms of assembly, the RNAP catalytic core consists of 2 alpha, 1 beta, 1 beta' and 1 omega subunit. When a sigma factor is associated with the core the holoenzyme is formed, which can initiate transcription. Mg(2+) is required as a cofactor. Zn(2+) serves as cofactor.

It carries out the reaction RNA(n) + a ribonucleoside 5'-triphosphate = RNA(n+1) + diphosphate. Its function is as follows. DNA-dependent RNA polymerase catalyzes the transcription of DNA into RNA using the four ribonucleoside triphosphates as substrates. The polypeptide is DNA-directed RNA polymerase subunit beta' (Chromobacterium violaceum (strain ATCC 12472 / DSM 30191 / JCM 1249 / CCUG 213 / NBRC 12614 / NCIMB 9131 / NCTC 9757 / MK)).